Here is a 230-residue protein sequence, read N- to C-terminus: DNA ADP-ribosyl transferase (230 aa).

Residues 26 to 230 enclose the DarT domain; the sequence is WIVWHFTHAD…KYVIKPGMYY (205 aa). Residues 30–32, Gly-39, Leu-47, and Arg-67 each bind NAD(+); that span reads HFT. Arg-67 serves as the catalytic Proton acceptor. Residue Glu-183 is part of the active site.

It belongs to the DarT ADP-ribosyltransferase family. As to quaternary structure, interacts with cognate antitoxin DarG (via C-terminus); this heterodimeric complex neutralizes the toxic effect of DarT by preventing ssDNA binding to DarT and consequently inactivating the toxin by direct protein-protein interactions.

It catalyses the reaction a thymidine in DNA + NAD(+) = an N-(ADP-alpha-D-ribosyl)-thymidine in DNA + nicotinamide + H(+). Functionally, toxic component of the hybrid type II/IV toxin-antitoxin (TA) system DarTG, which plays a crucial role in controlling bacterial growth and bacteriophage infection. ADP-ribosylates ssDNA, preferentially in the motif TTTW. In case of phage infection, DarT toxin ADP-ribosylates DNA, which inhibits both viral DNA and RNA synthesis and leads to abortive infection. Its toxic effect is neutralized by cognate antitoxin DarG. In Mycobacterium bovis (strain BCG / Pasteur 1173P2), this protein is DNA ADP-ribosyl transferase.